A 507-amino-acid polypeptide reads, in one-letter code: Germ cell nuclear acidic protein (507 aa).

The span at 1-51 (MDSGSSSSSSSSGSSSGSCSTSGSGSTSGSSTTSSSSSSSSSSSSSSSSSS) shows a compositional bias: low complexity. The tract at residues 1-507 (MDSGSSSSSS…GRGRGAKAGK (507 aa)) is disordered. 4 consecutive short sequence motifs (SUMO interaction motif 1 (SIM)) follow at residues 12-15 (SGSS), 66-69 (CVVI), 86-89 (VCEI), and 108-111 (LIVI). 3 stretches are compositionally biased toward basic and acidic residues: residues 122–141 (KNTK…KEGV), 179–354 (SEAK…KGEM), and 431–449 (PQDR…RGDS). Over residues 480–507 (GRGRGRGRGRGRGRGRGRGRGRGAKAGK) the composition is skewed to basic residues.

Belongs to the serine-aspartate repeat-containing protein (SDr) family. Interacts (via SIM domains) with SUMO2; this interaction allows the GCNA recruitment to DPCs sites. Interacts with TOP2A; this interaction allows the resolution of topoisomerase II (TOP2A) DNA-protein cross-links. In terms of tissue distribution, germ-cells specific.

The protein resides in the chromosome. The protein localises to the nucleus. It localises to the PML body. In terms of biological role, may play a role in DNA-protein cross-links (DPCs) clearance through a SUMO-dependent recruitment to sites of DPCs, ensuring the genomic stability by protecting germ cells and early embryos from various sources of damage. Can resolve the topoisomerase II (TOP2A) DPCs. The protein is Germ cell nuclear acidic protein of Mus musculus (Mouse).